A 224-amino-acid chain; its full sequence is Phosphoglycolate phosphatase (224 aa).

Residue Asp11 is the Nucleophile of the active site. Positions 11, 13, and 177 each coordinate Mg(2+).

Belongs to the HAD-like hydrolase superfamily. CbbY/CbbZ/Gph/YieH family. It depends on Mg(2+) as a cofactor.

The catalysed reaction is 2-phosphoglycolate + H2O = glycolate + phosphate. Its pathway is organic acid metabolism; glycolate biosynthesis; glycolate from 2-phosphoglycolate: step 1/1. Functionally, specifically catalyzes the dephosphorylation of 2-phosphoglycolate. Is involved in the dissimilation of the intracellular 2-phosphoglycolate formed during the DNA repair of 3'-phosphoglycolate ends, a major class of DNA lesions induced by oxidative stress. This chain is Phosphoglycolate phosphatase, found in Haemophilus influenzae (strain 86-028NP).